The primary structure comprises 383 residues: MVTVEEVRKAQRAEGPATVLAIGTATPPNCVGQSTYPDYYFRITNSEHKIELKQKFQRMCDKSMIKKRYMYLTEEILKENPSMCEYMAPSLDARQDMVIVEIPKLGKEAATKAIKEWGQPKSKITHLVFCTTSGVDMPGADYQLIKLFGLRPSVKRLMMYQQGCFAGGTVLRLAKDLAENNRGARVLVVCSEITVVTFRGPSDTHLDCLVGQALFGDGVASIIVGADPLPEIEKPLFELVSAAQTILPDSEGAIEGHLREVGLTFHLLENVPALISKNIEKSLNETFKPLDIMDWNSLFWIAHPGGPAILDQVEAKLGLKPEKLEATGHILSEYGNMSSACVLFILDVVRRKSAANGVTTRILSIGQISKSLLILAWFLFSLV.

The Nucleophile and monoketide coumarate intermediate role is filled by Cys-164.

Belongs to the thiolase-like superfamily. Chalcone/stilbene synthases family. As to quaternary structure, homodimer. In terms of tissue distribution, expressed in fruits.

The enzyme catalyses 4-coumaroyl-CoA + malonyl-CoA + H2O + H(+) = 4-hydroxybenzalacetone + 2 CO2 + 2 CoA. The catalysed reaction is (E)-4-coumaroyl-CoA + 3 malonyl-CoA + 3 H(+) = 2',4,4',6'-tetrahydroxychalcone + 3 CO2 + 4 CoA. Its pathway is secondary metabolite biosynthesis; flavonoid biosynthesis. With respect to regulation, inhibited by glutathione. Bifunctional polyketide synthase producing both 4-hydroxybenzalacetone and naringenin chalcone. Can use p-coumaryl-CoA and ferulyl-CoA as substrates. Catalyzes the initial key reaction step in the biosynthesis of phenylbutanoids. The chain is Polyketide synthase 4 (PKS4) from Rubus idaeus (Raspberry).